A 932-amino-acid chain; its full sequence is Adhesion G protein-coupled receptor E2 (932 aa).

A signal peptide spans 1 to 15 (MWGFWLLLFWGFSGT). Residues 16–652 (HRWGMTTLAI…TMEFSLYIIS (637 aa)) are Extracellular-facing. 2 consecutive EGF-like domains span residues 32–69 (GVNECQDTTTCPAYATCTDTTESYYCTCKQGFLPSNGQ) and 81–119 (DVNECLRSDSPCGSNSVCTNIPGRARCSCLSGFSSSAGG). 11 disulfides stabilise this stretch: Cys36-Cys48, Cys42-Cys57, Cys85-Cys98, Cys92-Cys107, Cys137-Cys149, Cys143-Cys158, Cys160-Cys171, Cys177-Cys189, Cys183-Cys198, Cys226-Cys239, and Cys233-Cys248. Residues 133–172 (DVDECLTIGICPKNSNCSNSVGSYSCTCQSGFVSNGSTCE) enclose the EGF-like 3; calcium-binding domain. Asn148 and Asn167 each carry an N-linked (GlcNAc...) asparagine glycan. The EGF-like 4; calcium-binding domain maps to 173 to 210 (DEDECVTRNACPEHATCHNTLGSYYCTCNEGLEFSGGG). In terms of domain architecture, EGF-like 5; calcium-binding spans 222-260 (DVDECSRNSTLCGPSFICINTLGSYSCSCPAGFSLSTFQ). Asn229 carries N-linked (GlcNAc...) asparagine glycosylation. Residues Asn269, Asn283, Asn309, Asn333, Asn344, Asn363, Asn405, Asn417, Asn474, and Asn499 are each glycosylated (N-linked (GlcNAc...) asparagine). The EGF-like 6; calcium-binding domain occupies 272–307 (DIDECDDICPSNSSCTNTLGSYFCTCHPGFASSNGQ). 2 disulfides stabilise this stretch: Cys276-Cys286 and Cys280-Cys295. Residues 319–354 (DIDECTQDPFRCGRNSSCTNVPGSYNCSCLPDFRMD) form the EGF-like 7; calcium-binding domain. Disulfide bonds link Cys323–Cys336 and Cys330–Cys345. One can recognise a GAIN-B domain in the interval 482–643 (EYLEIESKVI…AIIMASGELT (162 aa)). The Cell attachment site motif lies at 507–509 (RGD). Disulfide bonds link Cys596/Cys625 and Cys613/Cys627. Positions 596 to 643 (CVSWNTDVEDGRWTPSGCETVEASETHTVCSCNRMTNLAIIMASGELT) are GPS. A helical membrane pass occupies residues 653 to 673 (YVGTVISLVCLALAIATFLLF). Topologically, residues 674 to 681 (RAVQNHNT) are cytoplasmic. The helical transmembrane segment at 682 to 702 (YLHLHLCVCLFLAKILFLTGI) threads the bilayer. Topologically, residues 703–719 (DKTDNQTACAIIAGFLH) are extracellular. Asn707 carries N-linked (GlcNAc...) asparagine glycosylation. The chain crosses the membrane as a helical span at residues 720–740 (YLFLACFFWMLVEAVMLFLMV). The Cytoplasmic portion of the chain corresponds to 741–756 (RNLKVVNYFSSRNIKM). Residues 757-777 (LHLCAFGYGLPVVVVIISATV) form a helical membrane-spanning segment. The Extracellular portion of the chain corresponds to 778-795 (HPWGYGMHNRCWLNTETG). Residues 796–816 (FIWSFLGPVCMIITINSALLA) traverse the membrane as a helical segment. The Cytoplasmic portion of the chain corresponds to 817–849 (WTLWVLRQKLCSVNSEVSKLKDTRLLTFKAIAQ). A helical membrane pass occupies residues 850-870 (IFILGCSWVLGIFQIGPLASI). Residues 871–872 (MA) lie on the Extracellular side of the membrane. Residues 873 to 893 (YLFTTINSLQGAFIFLIHCLL) form a helical membrane-spanning segment. Residues 894–932 (NRQVRDEYRKLLTRKTDLSSHSQTSGILLSSMPSTSKTG) lie on the Cytoplasmic side of the membrane.

The protein belongs to the G-protein coupled receptor 2 family. Adhesion G-protein coupled receptor (ADGR) subfamily.

Its subcellular location is the cell membrane. Its function is as follows. Orphan receptor involved in cell adhesion and probably in cell-cell interactions involved specifically cells of the immune system. May play a role in regulatory T-cells (Treg) development. This Rattus norvegicus (Rat) protein is Adhesion G protein-coupled receptor E2 (Adgre1).